A 1338-amino-acid polypeptide reads, in one-letter code: Fanconi anemia group I protein (1338 aa).

Lys525 is covalently cross-linked (Glycyl lysine isopeptide (Lys-Gly) (interchain with G-Cter in ubiquitin)). Ser558 and Ser561 each carry phosphoserine. Thr567 bears the Phosphothreonine mark.

Belongs to the Fanconi anemia group I protein family. In terms of assembly, homodimer. Part of a FANCI-FANCD2 heterodimeric complex that binds and scans dsDNA for DNA damage. Interacts with FANCL. Interacts with MTMR15/FAN1. Interacts with POLN. Interacts with UBL5; the interaction promotes FANCI homodimerization. In terms of processing, monoubiquitinated by FANCL during S phase and upon genotoxic stress. Deubiquitinated by USP1 as cells enter G2/M, or once DNA repair is completed. Monoubiquitination requires the FANCA-FANCB-FANCC-FANCE-FANCF-FANCG-FANCM complex. Ubiquitination is required for binding to chromatin, DNA repair, and normal cell cycle progression. Monoubiquitination is stimulated by DNA-binding. Post-translationally, phosphorylated in response to DNA damage by ATM and/or ATR. Phosphorylation of FANCI promotes ubiquitination of FANCD2, which prevents DNA release from the FANCI-FANCD2 complex.

In terms of biological role, plays an essential role in the repair of DNA double-strand breaks by homologous recombination and in the repair of interstrand DNA cross-links (ICLs) by promoting FANCD2 monoubiquitination by FANCL and participating in recruitment to DNA repair sites. The FANCI-FANCD2 complex binds and scans double-stranded DNA (dsDNA) for DNA damage; this complex stalls at DNA junctions between double-stranded DNA and single-stranded DNA. Participates in S phase and G2 phase checkpoint activation upon DNA damage. The protein is Fanconi anemia group I protein of Gallus gallus (Chicken).